The primary structure comprises 558 residues: 2-hydroxy-7-methoxy-5-methyl-1-naphthoate--CoA ligase (558 aa).

Residues 212 to 213 (GG), 329 to 331 (ASR), Val351, Asp435, Arg450, and Lys542 each bind ATP.

This sequence belongs to the ATP-dependent AMP-binding enzyme family.

The enzyme catalyses 2-hydroxy-7-methoxy-5-methyl-1-naphthoate + ATP + CoA = 2-hydroxy-7-methoxy-5-methyl-1-naphthoyl-CoA + AMP + diphosphate. Its pathway is antibiotic biosynthesis. Catalyzes the activation of 2-hydroxy-7-methoxy-5-methyl-1-naphthoate in the biosynthesis of the naphthoate moiety of the neocarzinostatin chromophore. Also catalyzes the activation of other 1-naphthoic acid analogs such as 2-hydroxy-5-methyl-1-naphthoate or 2,7-dihydroxy-5-methyl-1-naphthoate in vitro. This is 2-hydroxy-7-methoxy-5-methyl-1-naphthoate--CoA ligase from Streptomyces carzinostaticus.